The sequence spans 1243 residues: Membrane-associated phosphatidylinositol transfer protein 1 (1243 aa).

Thr-59, Thr-282, and Thr-287 each carry phosphothreonine. Residues 259–330 form a disordered region; the sequence is CNTGSEGPEA…HGGGVSPQSL (72 aa). The span at 271-283 shows a compositional bias: polar residues; sequence PGKSSTEARPGTS. Low complexity predominate over residues 299-319; that stretch reads ASPDASFGKQWSSSSRSSYSS. Phosphoserine is present on residues Ser-300, Ser-304, Ser-319, Ser-326, Ser-329, Ser-342, Ser-345, Ser-346, and Ser-373. Residue Ser-382 is modified to Phosphoserine; by CDK1. Over residues 581-593 the composition is skewed to low complexity; that stretch reads AGPGSRGSSRRGS. The tract at residues 581 to 679 is disordered; that stretch reads AGPGSRGSSR…PASSEAPDGP (99 aa). Phosphoserine occurs at positions 593, 600, and 621. Residues 643–658 are compositionally biased toward polar residues; the sequence is GSQNSLQVASTATSSG. The DDHD domain occupies 684–878; the sequence is RLDFKVSGFF…VVAFILRQVI (195 aa). A Phosphoserine modification is found at Ser-895. The disordered stretch occupies residues 1206–1243; sequence LLRSRGPSQVDREGPGTPPTTLARGKTRSISLKLDSEE. Residues Arg-1210 and Arg-1217 each carry the omega-N-methylarginine modification. Ser-1236 bears the Phosphoserine mark.

This sequence belongs to the PtdIns transfer protein family. PI transfer class IIA subfamily. Interacts with PTK2B via its C-terminus. Interacts with RHOA. Has higher affinity for the inactive, GDP-bound form of RHOA. The CDK1-phosphorylated form interacts with PLK1. Interacts with VAPB and PIK4CA. In terms of processing, phosphorylated on multiple sites by CDK1 at the onset of mitosis. Phosphorylation facilitates dissociation from the Golgi complex and is required for interaction with PLK1. Phosphorylated on threonine residues upon treatment with oleic acid. Post-translationally, phosphorylated on tyrosine residues by PTK2B. In terms of tissue distribution, detected at high levels in brain, and at lower levels in lung, kidney, spleen and liver (at protein level). Ubiquitous. Highly expressed in embryonic retina and the central nervous system.

It is found in the cytoplasm. The protein localises to the golgi apparatus. It localises to the golgi stack membrane. The protein resides in the endoplasmic reticulum membrane. Its subcellular location is the lipid droplet. It is found in the cleavage furrow. The protein localises to the midbody. It carries out the reaction a 1,2-diacyl-sn-glycero-3-phospho-(1D-myo-inositol)(in) = a 1,2-diacyl-sn-glycero-3-phospho-(1D-myo-inositol)(out). Functionally, catalyzes the transfer of phosphatidylinositol (PI) between membranes. Binds PI. Also binds phosphatidylcholine (PC) and phosphatidic acid (PA) with the binding affinity order of PI &gt; PA &gt; PC. Regulates RHOA activity, and plays a role in cytoskeleton remodeling. Necessary for normal completion of cytokinesis. Plays a role in maintaining normal diacylglycerol levels in the Golgi apparatus. Necessary for maintaining the normal structure of the endoplasmic reticulum and the Golgi apparatus. Required for protein export from the endoplasmic reticulum and the Golgi. Binds calcium ions. The sequence is that of Membrane-associated phosphatidylinositol transfer protein 1 (Pitpnm1) from Mus musculus (Mouse).